We begin with the raw amino-acid sequence, 512 residues long: Alpha-1B-glycoprotein (512 aa).

Residues 1 to 18 form the signal peptide; sequence MSLLATVLLLWGFTLGPG. Ig-like V-type domains follow at residues 22-126, 127-219, 220-312, 313-415, and 416-512; these read MLDS…VTGK, EPLP…MYAS, QAPP…PVEL, MWSD…LRVN, and GPPP…IVEG. Asn-44, Asn-89, and Asn-192 each carry an N-linked (GlcNAc...) asparagine glycan. Cystine bridges form between Cys-49–Cys-96, Cys-153–Cys-195, Cys-245–Cys-292, Cys-343–Cys-392, and Cys-441–Cys-488. Residues Asn-369, Asn-381, Asn-389, and Asn-485 are each glycosylated (N-linked (GlcNAc...) asparagine).

In terms of assembly, interacts with CRISP3. In terms of tissue distribution, expressed in the liver hepatocytes of male and female GH transgenic mice and in the liver of female, but not of male, non-transgenic mice.

The protein localises to the secreted. The polypeptide is Alpha-1B-glycoprotein (A1bg) (Mus musculus (Mouse)).